Reading from the N-terminus, the 258-residue chain is Transcription factor RSL3 (258 aa).

A D-box motif is present at residues 98–105; sequence RKLLDVEN. Residues 119-178 are disordered; it reads ELAKSKKKQRVSSESNTVDESNTNWVDGQSLSNSSDDEKASVTSVKGKTRATKGTATDPQ. Residues 130-152 show a composition bias toward polar residues; sequence SSESNTVDESNTNWVDGQSLSNS. The segment at 173–186 is basic motif; that stretch reads TATDPQSLYARKRR. One can recognise a bHLH domain in the interval 173-222; sequence TATDPQSLYARKRREKINERLKTLQNLVPNGTKVDISTMLEEAVHYVKFL. The segment at 187–222 is helix-loop-helix motif; sequence EKINERLKTLQNLVPNGTKVDISTMLEEAVHYVKFL.

Homodimer. Ubiquitinated. Ubiquitination leads to its subsequent degradation by the 26S proteasome. In terms of tissue distribution, expressed constitutively in roots, leaves, and flowers. Expressed in root epidermal hair cells.

Its subcellular location is the nucleus. Functionally, transcription factor involved in the regulation of root hair elongation. Is sufficient to promote postmitotic cell growth in root-hair cells and is a direct transcriptional target of RHD6 and RSL1. Involved in the regulation of root hair elongation in response to low phosphate. Controls root hair cell growth by regulating the expression of genes encoding proteins involved in cell signaling, cell wall modification and secretion. This Arabidopsis thaliana (Mouse-ear cress) protein is Transcription factor RSL3.